A 378-amino-acid chain; its full sequence is Phosphoserine aminotransferase (378 aa).

Position 53 (Arg-53) interacts with L-glutamate. Positions 117, 167, 190, and 213 each coordinate pyridoxal 5'-phosphate. Position 214 is an N6-(pyridoxal phosphate)lysine (Lys-214). 255 to 256 (NT) serves as a coordination point for pyridoxal 5'-phosphate.

Belongs to the class-V pyridoxal-phosphate-dependent aminotransferase family. SerC subfamily. In terms of assembly, homodimer. Pyridoxal 5'-phosphate serves as cofactor.

Its subcellular location is the cytoplasm. It catalyses the reaction O-phospho-L-serine + 2-oxoglutarate = 3-phosphooxypyruvate + L-glutamate. The enzyme catalyses 4-(phosphooxy)-L-threonine + 2-oxoglutarate = (R)-3-hydroxy-2-oxo-4-phosphooxybutanoate + L-glutamate. Its pathway is amino-acid biosynthesis; L-serine biosynthesis; L-serine from 3-phospho-D-glycerate: step 2/3. It participates in cofactor biosynthesis; pyridoxine 5'-phosphate biosynthesis; pyridoxine 5'-phosphate from D-erythrose 4-phosphate: step 3/5. Its function is as follows. Catalyzes the reversible conversion of 3-phosphohydroxypyruvate to phosphoserine and of 3-hydroxy-2-oxo-4-phosphonooxybutanoate to phosphohydroxythreonine. This chain is Phosphoserine aminotransferase, found in Ralstonia nicotianae (strain ATCC BAA-1114 / GMI1000) (Ralstonia solanacearum).